We begin with the raw amino-acid sequence, 99 residues long: Keratinocyte differentiation-associated protein (99 aa).

The N-terminal stretch at 1 to 22 (MKIPVLPAVVLLSLLALHSAQG) is a signal peptide.

Highly expressed in skin, but not detectable in any other tissue examined. Expression restricted to cornified/stratified epithelia and not detected in non-cornified/stratified epithelia.

The protein resides in the secreted. May act as a soluble regulator of keratinocyte differentiation. May play an important role in embryonic skin morphogenesis. This chain is Keratinocyte differentiation-associated protein, found in Canis lupus familiaris (Dog).